A 584-amino-acid polypeptide reads, in one-letter code: Cytosolic Fe-S cluster assembly factor NAR1 (584 aa).

C20, C81, C84, C87, C190, C245, C465, and C469 together coordinate [4Fe-4S] cluster.

It belongs to the NARF family.

In terms of biological role, component of the cytosolic Fe/S protein assembly machinery. Required for maturation of extramitochondrial Fe/S proteins. May play a role in the transfer of pre-assembled Fe/S clusters to target apoproteins. The polypeptide is Cytosolic Fe-S cluster assembly factor NAR1 (NAR1) (Candida dubliniensis (strain CD36 / ATCC MYA-646 / CBS 7987 / NCPF 3949 / NRRL Y-17841) (Yeast)).